Here is a 319-residue protein sequence, read N- to C-terminus: uncharacterized protein (319 aa).

A signal peptide spans 1 to 23 (MFPFRRNVLAFAALLALSSPVLA).

This sequence to H.influenzae HI_0755.

This is an uncharacterized protein from Escherichia coli (strain K12).